Reading from the N-terminus, the 217-residue chain is Large ribosomal subunit protein uL16 (217 aa).

It belongs to the universal ribosomal protein uL16 family. Component of the small ribosomal subunit. Mature ribosomes consist of a small (40S) and a large (60S) subunit. The 40S subunit contains about 33 different proteins and 1 molecule of RNA (18S). The 60S subunit contains about 49 different proteins and 3 molecules of RNA (25S, 5.8S and 5S).

In Dictyostelium discoideum (Social amoeba), this protein is Large ribosomal subunit protein uL16 (rpl10).